The following is a 75-amino-acid chain: Small ribosomal subunit protein bS18c (75 aa).

This sequence belongs to the bacterial ribosomal protein bS18 family. Part of the 30S ribosomal subunit.

The protein localises to the plastid. It localises to the chloroplast. In Angiopteris evecta (Mule's foot fern), this protein is Small ribosomal subunit protein bS18c.